We begin with the raw amino-acid sequence, 211 residues long: Transmembrane protein 247 (211 aa).

Composition is skewed to basic and acidic residues over residues 1 to 10 (MAMEDREVME) and 31 to 45 (PEGK…EVPK). The tract at residues 1–90 (MAMEDREVME…AGDGPGLESV (90 aa)) is disordered. Residues 63 to 73 (PGPPRSLPPKS) show a composition bias toward pro residues. Positions 119-148 (KYLHQENERQRQHEEVMEQLQQQQQQQQAL) form a coiled coil. The next 2 membrane-spanning stretches (helical) occupy residues 159-179 (LLLP…IHII) and 186-206 (VFFL…LCLI).

It localises to the membrane. The sequence is that of Transmembrane protein 247 (Tmem247) from Mus musculus (Mouse).